Consider the following 202-residue polypeptide: Adenylyl-sulfate kinase (202 aa).

An ATP-binding site is contributed by 31–38 (GLSASGKS). Ser105 functions as the Phosphoserine intermediate in the catalytic mechanism.

It belongs to the APS kinase family.

It catalyses the reaction adenosine 5'-phosphosulfate + ATP = 3'-phosphoadenylyl sulfate + ADP + H(+). The protein operates within sulfur metabolism; hydrogen sulfide biosynthesis; sulfite from sulfate: step 2/3. Catalyzes the synthesis of activated sulfate. In Saccharomyces pastorianus (Lager yeast), this protein is Adenylyl-sulfate kinase (MET14).